Reading from the N-terminus, the 248-residue chain is PF03932 family protein CutC (248 aa).

The protein belongs to the CutC family. In terms of assembly, homodimer.

The protein resides in the cytoplasm. The polypeptide is PF03932 family protein CutC (Shigella boydii serotype 4 (strain Sb227)).